Here is a 473-residue protein sequence, read N- to C-terminus: Fumarate hydratase class II 2 (473 aa).

The disordered stretch occupies residues 1–28; sequence MAKSARTKTARPATRTETDSFGPIEVPS. Substrate contacts are provided by residues 108-110, 139-142, 149-151, and threonine 197; these read SGT, HPND, and SSN. Histidine 198 acts as the Proton donor/acceptor in catalysis. The active site involves serine 328. Substrate is bound by residues serine 329 and 334–336; that span reads KVN.

Belongs to the class-II fumarase/aspartase family. Fumarase subfamily. Homotetramer.

The protein localises to the cytoplasm. It catalyses the reaction (S)-malate = fumarate + H2O. Its pathway is carbohydrate metabolism; tricarboxylic acid cycle; (S)-malate from fumarate: step 1/1. Involved in the TCA cycle. Catalyzes the stereospecific interconversion of fumarate to L-malate. The sequence is that of Fumarate hydratase class II 2 from Bradyrhizobium diazoefficiens (strain JCM 10833 / BCRC 13528 / IAM 13628 / NBRC 14792 / USDA 110).